We begin with the raw amino-acid sequence, 498 residues long: DNA primase (498 aa).

A CHC2-type zinc finger spans residues 35-59 (CPFHPDDTPSFYVSPSKQIFKCFGC). The Toprim domain maps to 243–324 (GFAILVEGYF…EVYPVYLPEG (82 aa)). Glutamate 249, aspartate 293, and aspartate 295 together coordinate Mg(2+).

It belongs to the DnaG primase family. Monomer. Interacts with DnaB. Requires Zn(2+) as cofactor. Mg(2+) is required as a cofactor.

It catalyses the reaction ssDNA + n NTP = ssDNA/pppN(pN)n-1 hybrid + (n-1) diphosphate.. In terms of biological role, RNA polymerase that catalyzes the synthesis of short RNA molecules used as primers for DNA polymerase during DNA replication. The sequence is that of DNA primase from Aquifex aeolicus (strain VF5).